We begin with the raw amino-acid sequence, 349 residues long: Tetraacyldisaccharide 4'-kinase (349 aa).

58-65 (TAGGSGKT) contributes to the ATP binding site.

It belongs to the LpxK family.

The enzyme catalyses a lipid A disaccharide + ATP = a lipid IVA + ADP + H(+). It functions in the pathway glycolipid biosynthesis; lipid IV(A) biosynthesis; lipid IV(A) from (3R)-3-hydroxytetradecanoyl-[acyl-carrier-protein] and UDP-N-acetyl-alpha-D-glucosamine: step 6/6. In terms of biological role, transfers the gamma-phosphate of ATP to the 4'-position of a tetraacyldisaccharide 1-phosphate intermediate (termed DS-1-P) to form tetraacyldisaccharide 1,4'-bis-phosphate (lipid IVA). The sequence is that of Tetraacyldisaccharide 4'-kinase from Shewanella amazonensis (strain ATCC BAA-1098 / SB2B).